A 584-amino-acid chain; its full sequence is Keratin, type I cytoskeletal 10 (584 aa).

Over residues 1-15 the composition is skewed to low complexity; sequence MSVRYSSSKHYSSSR. Residues 1–24 are disordered; sequence MSVRYSSSKHYSSSRSGGGGGGGG. Residues 1 to 145 form a head region; the sequence is MSVRYSSSKH…GGDGGLLSGN (145 aa). 6 positions are modified to phosphoserine: Ser-14, Ser-16, Ser-42, Ser-53, Ser-56, and Ser-170. A coil 1A region spans residues 146–181; that stretch reads EKVTMQNLNDRLASYLDKVRALEESNYELEGKIKEW. One can recognise an IF rod domain in the interval 146–460; it reads EKVTMQNLND…SLLEGEGSSG (315 aa). The interval 182 to 202 is linker 1; sequence YEKHGNSHQGEPRDYSKYYKT. The tract at residues 203-294 is coil 1B; sequence IDDLKNQILN…KNHEEEMKDL (92 aa). Residues 295–317 form a linker 12 region; that stretch reads RNVSTGDVNVEMNAAPGVDLTQL. Residues 318-456 are coil 2; that stretch reads LNNMRSQYEQ…QTYRSLLEGE (139 aa). The segment at 453–584 is disordered; it reads LEGEGSSGGG…GESSSKGPRY (132 aa). A compositionally biased stretch (gly residues) spans 457–563; sequence GSSGGGGRGG…GGGYGGGSSS (107 aa). Residues 457 to 584 are tail; sequence GSSGGGGRGG…GESSSKGPRY (128 aa). A compositionally biased stretch (low complexity) spans 564–584; it reads GGHKSSSSGSVGESSSKGPRY.

The protein belongs to the intermediate filament family. As to quaternary structure, heterotetramer of two type I and two type II keratins. Heterodimer with KRT1. Two heterodimers of KRT1 and KRT10 form a heterotetramer. The KRT10 subunit in the heterotetramer is probably disulfide-linked. Interacts with PLEC isoform 1C, when in a heterodimer with KRT1. (Microbial infection) Interacts (via C-terminal tail domain) with the S.aureus clumping factor, clfB; this interaction probably mediates S.aureus attachment to the keratinized squamous epithelial cells from the nasal cavity. In terms of assembly, (Microbial infection) Interacts (via the C-terminal tail domain) with S.pneumoniae serine-rich repeat protein PsrP; this interaction probably mediates S.pneumoniae adherence to lung tissue and subsequent pathogenesis. Neither protein has to be glycosylated for the interaction to occur. Seen in all suprabasal cell layers including stratum corneum. Expressed on the surface of lung cell lines. Localized on the surface of desquamated nasal epithelial cells (at protein level).

The protein localises to the secreted. Its subcellular location is the extracellular space. The protein resides in the cell surface. It localises to the cytoplasm. Its function is as follows. Plays a role in the establishment of the epidermal barrier on plantar skin. Involved in the maintenance of cell layer development and keratin filament bundles in suprabasal cells of the epithelium. In terms of biological role, (Microbial infection) Acts as a mediator of S.aureus adherence to desquamated nasal epithelial cells via clfB, and hence may play a role in nasal colonization. (Microbial infection) Binds S.pneumoniae PsrP, mediating adherence of the bacteria to lung cell lines. Reduction of levels of KRT10 keratin decrease adherence, overexpression increases adherence. Neither protein has to be glycosylated for the interaction to occur. This Homo sapiens (Human) protein is Keratin, type I cytoskeletal 10 (KRT10).